A 477-amino-acid chain; its full sequence is TNF receptor-associated factor family protein DDB_G0278133 (477 aa).

The RING-type; degenerate zinc-finger motif lies at 45–88 (CDICTLELFIESEPKALQCKEGHLACRRCWERYLSTNKQCMTCK). 2 consecutive TRAF-type zinc fingers follow at residues 160 to 211 (NHYK…SSLS) and 212 to 267 (DHHK…SKMQ). Residues 271-326 (LEHSVTKLMNQNEIIKKDNQNLDQEKKIEEIKLKLNNLLNNYIQLKNEIAVLKQNS) are a coiled coil. One can recognise an MATH domain in the interval 331–463 (VYSNKWIIPE…FLNEKGELEI (133 aa)).

Belongs to the TNF receptor-associated factor family. A subfamily.

It localises to the cytoplasm. In terms of biological role, probable adapter protein and signal transducer that links members of the tumor necrosis factor receptor family to different signaling pathways by association with the receptor cytoplasmic domain and kinases. This is TNF receptor-associated factor family protein DDB_G0278133 from Dictyostelium discoideum (Social amoeba).